The following is a 38-amino-acid chain: Toxic protein TimP (38 aa).

A transmembrane span lies at residues 1–20 (MKVRCFCVVLLVSGTLCLHA).

It belongs to the TimP toxin family.

It is found in the cell inner membrane. In terms of biological role, toxic component of a probable type I toxin-antitoxin (TA) system. Neutralized by sRNA antitoxin TimR which binds to the 5' UTR of timP mRNA and inhibits translation. When TimP is expressed from its promoter in the absence of antitoxin leads to mild cell stress; overexpression in situ is toxic to the cell and causes membrane leakage. The antitoxin gene is encoded immediately upstream and transcribed divergently from the toxin gene; antitoxin RNA is less stable than timP mRNA. This Salmonella typhimurium (strain SL1344) protein is Toxic protein TimP.